We begin with the raw amino-acid sequence, 399 residues long: Phosphoglycerate kinase (399 aa).

Residues 24–26 (DLN), Arg41, 64–67 (HLGR), Arg123, and Arg160 each bind substrate. Residues Lys210, Gly298, Glu329, and 355–358 (GGDS) contribute to the ATP site.

Belongs to the phosphoglycerate kinase family. Monomer.

The protein localises to the cytoplasm. The catalysed reaction is (2R)-3-phosphoglycerate + ATP = (2R)-3-phospho-glyceroyl phosphate + ADP. Its pathway is carbohydrate degradation; glycolysis; pyruvate from D-glyceraldehyde 3-phosphate: step 2/5. The protein is Phosphoglycerate kinase of Salinispora arenicola (strain CNS-205).